The chain runs to 161 residues: Cyclic pyranopterin monophosphate synthase (161 aa).

Residues 75–77 (MCH) and 114–115 (ME) contribute to the substrate site. Asp-129 is a catalytic residue.

The protein belongs to the MoaC family. In terms of assembly, homohexamer; trimer of dimers.

It carries out the reaction (8S)-3',8-cyclo-7,8-dihydroguanosine 5'-triphosphate = cyclic pyranopterin phosphate + diphosphate. It participates in cofactor biosynthesis; molybdopterin biosynthesis. Its function is as follows. Catalyzes the conversion of (8S)-3',8-cyclo-7,8-dihydroguanosine 5'-triphosphate to cyclic pyranopterin monophosphate (cPMP). In Staphylococcus carnosus (strain TM300), this protein is Cyclic pyranopterin monophosphate synthase.